A 218-amino-acid polypeptide reads, in one-letter code: Testis expressed protein 56 (218 aa).

This Rattus norvegicus (Rat) protein is Testis expressed protein 56 (Tex56).